Here is a 436-residue protein sequence, read N- to C-terminus: Trigger factor (436 aa).

The 86-residue stretch at 161 to 246 (GDQLNIDFVG…VNSVSEAELP (86 aa)) folds into the PPIase FKBP-type domain.

This sequence belongs to the FKBP-type PPIase family. Tig subfamily.

The protein localises to the cytoplasm. It carries out the reaction [protein]-peptidylproline (omega=180) = [protein]-peptidylproline (omega=0). Functionally, involved in protein export. Acts as a chaperone by maintaining the newly synthesized protein in an open conformation. Functions as a peptidyl-prolyl cis-trans isomerase. The polypeptide is Trigger factor (Azotobacter vinelandii (strain DJ / ATCC BAA-1303)).